Consider the following 265-residue polypeptide: 3-methyl-2-oxobutanoate hydroxymethyltransferase (265 aa).

Residues D44 and D83 each contribute to the Mg(2+) site. 3-methyl-2-oxobutanoate is bound by residues 44 to 45, D83, and K113; that span reads DS. E115 provides a ligand contact to Mg(2+). Residue E183 is the Proton acceptor of the active site.

It belongs to the PanB family. In terms of assembly, homodecamer; pentamer of dimers. It depends on Mg(2+) as a cofactor.

Its subcellular location is the cytoplasm. The enzyme catalyses 3-methyl-2-oxobutanoate + (6R)-5,10-methylene-5,6,7,8-tetrahydrofolate + H2O = 2-dehydropantoate + (6S)-5,6,7,8-tetrahydrofolate. It participates in cofactor biosynthesis; (R)-pantothenate biosynthesis; (R)-pantoate from 3-methyl-2-oxobutanoate: step 1/2. Catalyzes the reversible reaction in which hydroxymethyl group from 5,10-methylenetetrahydrofolate is transferred onto alpha-ketoisovalerate to form ketopantoate. The sequence is that of 3-methyl-2-oxobutanoate hydroxymethyltransferase from Leptospira interrogans serogroup Icterohaemorrhagiae serovar copenhageni (strain Fiocruz L1-130).